The following is a 498-amino-acid chain: Glycerol kinase 1 (498 aa).

T12 contacts ADP. T12, T13, and S14 together coordinate ATP. Sn-glycerol 3-phosphate is bound at residue T12. Residue R16 participates in ADP binding. Residues R82, E83, Y134, and D243 each coordinate sn-glycerol 3-phosphate. Positions 82, 83, 134, 243, and 244 each coordinate glycerol. ADP contacts are provided by T265 and G308. T265, G308, Q312, and G409 together coordinate ATP. Residues G409 and N413 each contribute to the ADP site.

This sequence belongs to the FGGY kinase family. In terms of assembly, homotetramer and homodimer (in equilibrium).

It carries out the reaction glycerol + ATP = sn-glycerol 3-phosphate + ADP + H(+). The protein operates within polyol metabolism; glycerol degradation via glycerol kinase pathway; sn-glycerol 3-phosphate from glycerol: step 1/1. Its activity is regulated as follows. Activated by phosphorylation and inhibited by fructose 1,6-bisphosphate (FBP). In terms of biological role, key enzyme in the regulation of glycerol uptake and metabolism. Catalyzes the phosphorylation of glycerol to yield sn-glycerol 3-phosphate. The protein is Glycerol kinase 1 of Clostridium tetani (strain Massachusetts / E88).